The following is a 429-amino-acid chain: GDP-fucose protein O-fucosyltransferase 2 (429 aa).

An N-terminal signal peptide occupies residues 1 to 21 (MATLSFVFLLLGAVSWPPASA). 53–57 (PEGFN) contacts GDP-beta-L-fucose. E54 acts as the Proton acceptor in catalysis. A disulfide bridge links C161 with C192. 3 N-linked (GlcNAc...) asparagine glycosylation sites follow: N189, N209, and N259. GDP-beta-L-fucose is bound by residues 292–294 (HLR), D371, and 388–389 (TF). Cysteines 412 and 419 form a disulfide.

It belongs to the glycosyltransferase 68 family. In terms of tissue distribution, isoform A is expressed in fetal liver and peripheral blood lymphocytes. Isoform B is expressed in spleen, lung, testis, bone marrow, thymus, pancreas, prostate, fetal brain, fetal liver and fetal kidney. Isoform C is expressed in brain, heart, spleen, liver, lung, stomach, testis, placenta, skin, thymus, pancreas, mammary gland, prostate, fetal brain, fetal liver and fetal heart.

The protein localises to the endoplasmic reticulum. It localises to the golgi apparatus. The catalysed reaction is L-seryl-[protein] + GDP-beta-L-fucose = 3-O-(alpha-L-fucosyl)-L-seryl-[protein] + GDP + H(+). It catalyses the reaction L-threonyl-[protein] + GDP-beta-L-fucose = 3-O-(alpha-L-fucosyl)-L-threonyl-[protein] + GDP + H(+). It participates in protein modification; protein glycosylation. Inhibited by EDTA and by Zn(2+). Functionally, catalyzes the reaction that attaches fucose through an O-glycosidic linkage to a conserved serine or threonine residue in the consensus sequence C1-X-X-S/T-C2 of thrombospondin type I repeats (TSRs) where C1 and C2 are the first and second cysteines of the repeat, respectively. O-fucosylates members of several protein families including the ADAMTS, the thrombospondin (TSP) and spondin families. Required for the proper secretion of ADAMTS family members such as ADAMTSL1 and ADAMTS13. The O-fucosylation of TSRs is also required for restricting epithelial to mesenchymal transition (EMT), maintaining the correct patterning of mesoderm and localization of the definite endoderm. This Homo sapiens (Human) protein is GDP-fucose protein O-fucosyltransferase 2 (POFUT2).